The primary structure comprises 362 residues: Flagellar P-ring protein (362 aa).

Positions 1–18 (MKHIALIVLYFLSFSVQA) are cleaved as a signal peptide.

This sequence belongs to the FlgI family. The basal body constitutes a major portion of the flagellar organelle and consists of four rings (L,P,S, and M) mounted on a central rod.

The protein resides in the periplasm. The protein localises to the bacterial flagellum basal body. In terms of biological role, assembles around the rod to form the L-ring and probably protects the motor/basal body from shearing forces during rotation. The polypeptide is Flagellar P-ring protein (Marinomonas sp. (strain MWYL1)).